The sequence spans 480 residues: Outer capsid protein VP5 (480 aa).

An involved in membrane permeabilization region spans residues 1-48 (MTSKRLGARFPGFLNRIGSGITRAARSDTTKRIPSAAGRAVERVAASE).

Belongs to the orbivirus VP5 family.

It is found in the virion. In terms of biological role, VP5 protein is one of the two proteins (with VP2) which constitute the virus particle outer capsid. Acts as a membrane permeabilization protein that mediates release of viral particles from endosomal compartments into the cytoplasm. Permeabilization activity is probably negatively regulated by VP2 and is triggered by endosomal degradation of VP2 and exposure to low pH. In Ixodes (gulls), this protein is Outer capsid protein VP5 (Segment-6).